Reading from the N-terminus, the 299-residue chain is MSATATLPAVRGKLTPQAPLAPLVWFKSGGAADWLFEPKDVDDLADFLRDLDPAIPVMALGLGSNLIVRDGGFPGVVVRLGKAFAKVEPIDATTLRCGGGASGILVSSTARDAGIAGMEFLRSIPGTVGGFVRMNGGAYGGEVKDILVDCDVVLRSGERKTLALADLGYTYRHSELPEGAVVVGATFRGRPGASAAIQAEMDRISASREASQPLRSRTGGSTFKNPAGHKAWQLVDAAGCRGLMVGGAQVSEKHTNFLINTGDATSADIEALGEEVRRRVKDKSGIELQWEIQRVGKAE.

Residues 27-192 enclose the FAD-binding PCMH-type domain; sequence KSGGAADWLF…VGATFRGRPG (166 aa). Arginine 172 is a catalytic residue. The tract at residues 206–225 is disordered; the sequence is ASREASQPLRSRTGGSTFKN. Positions 208-224 are enriched in polar residues; that stretch reads REASQPLRSRTGGSTFK. The active-site Proton donor is serine 221. Residue glutamate 291 is part of the active site.

The protein belongs to the MurB family. FAD serves as cofactor.

The protein localises to the cytoplasm. It carries out the reaction UDP-N-acetyl-alpha-D-muramate + NADP(+) = UDP-N-acetyl-3-O-(1-carboxyvinyl)-alpha-D-glucosamine + NADPH + H(+). Its pathway is cell wall biogenesis; peptidoglycan biosynthesis. Its function is as follows. Cell wall formation. This is UDP-N-acetylenolpyruvoylglucosamine reductase from Sphingopyxis alaskensis (strain DSM 13593 / LMG 18877 / RB2256) (Sphingomonas alaskensis).